Reading from the N-terminus, the 476-residue chain is MFQYSAEFKQAKVLVLGDVMLDRYWFGATNRISPEAPVPVVRVQDNEERAGGAANVAMNIAALNVPVKLLGLTGRDETGLALESLLAKSRIECDFVQLHTHPTITKLRILSRHQQLLRLDFEEDFQNVTSDALLQKLDSALQNYGALVLSDYGKGTLNQVQKMIQLARQANIPVLIDPKGTDFERYRGATLLTPNMSEFEAVVGKCDSEEEIIEKGLKLIEQIDLSALLVTRSEKGMTLLRPNQPAFHLATEAKEVFDVTGAGDTVISVLATGLADGRSFEEACYLANVAAGIVVGKLGTSTVSTVELENAIHGRSNTGFGIMSEAELKRVVAQAKARGEKIVMTNGCFDILHPGHVSYLENARKLGDRLIVAVNSDDSVKRLKGETRPINDLQSRMAVLAGLSSVDWLVAFHEDTPQRLIAEVLPDLLVKGGDYKPEDIAGSQEVWASGGDVKVLNFENGCSTSNVISKIQQLKD.

The segment at Met1–Thr318 is ribokinase. Residue Asn195 to Glu198 participates in ATP binding. Residue Asp264 is part of the active site. The cytidylyltransferase stretch occupies residues Met344–Asp476.

The protein in the N-terminal section; belongs to the carbohydrate kinase PfkB family. It in the C-terminal section; belongs to the cytidylyltransferase family. Homodimer.

It catalyses the reaction D-glycero-beta-D-manno-heptose 7-phosphate + ATP = D-glycero-beta-D-manno-heptose 1,7-bisphosphate + ADP + H(+). It carries out the reaction D-glycero-beta-D-manno-heptose 1-phosphate + ATP + H(+) = ADP-D-glycero-beta-D-manno-heptose + diphosphate. It participates in nucleotide-sugar biosynthesis; ADP-L-glycero-beta-D-manno-heptose biosynthesis; ADP-L-glycero-beta-D-manno-heptose from D-glycero-beta-D-manno-heptose 7-phosphate: step 1/4. Its pathway is nucleotide-sugar biosynthesis; ADP-L-glycero-beta-D-manno-heptose biosynthesis; ADP-L-glycero-beta-D-manno-heptose from D-glycero-beta-D-manno-heptose 7-phosphate: step 3/4. The protein operates within bacterial outer membrane biogenesis; LPS core biosynthesis. In terms of biological role, catalyzes the phosphorylation of D-glycero-D-manno-heptose 7-phosphate at the C-1 position to selectively form D-glycero-beta-D-manno-heptose-1,7-bisphosphate. Functionally, catalyzes the ADP transfer from ATP to D-glycero-beta-D-manno-heptose 1-phosphate, yielding ADP-D-glycero-beta-D-manno-heptose. In Pasteurella multocida (strain Pm70), this protein is Bifunctional protein HldE.